We begin with the raw amino-acid sequence, 462 residues long: tRNA modification GTPase MnmE (462 aa).

The (6S)-5-formyl-5,6,7,8-tetrahydrofolate site is built by Arg-26, Glu-91, and Arg-130. A TrmE-type G domain is found at 228–382 (GLSTAKIGRP…IEERINDIFF (155 aa)). A K(+)-binding site is contributed by Asn-238. GTP contacts are provided by residues 238–243 (NVGKSQ), 257–263 (TDIEGTT), and 282–285 (DTAG). Ser-242 is a binding site for Mg(2+). Residues Thr-257, Ile-259, and Thr-262 each contribute to the K(+) site. Thr-263 contacts Mg(2+). Lys-462 serves as a coordination point for (6S)-5-formyl-5,6,7,8-tetrahydrofolate.

It belongs to the TRAFAC class TrmE-Era-EngA-EngB-Septin-like GTPase superfamily. TrmE GTPase family. As to quaternary structure, homodimer. Heterotetramer of two MnmE and two MnmG subunits. It depends on K(+) as a cofactor.

The protein resides in the cytoplasm. Its function is as follows. Exhibits a very high intrinsic GTPase hydrolysis rate. Involved in the addition of a carboxymethylaminomethyl (cmnm) group at the wobble position (U34) of certain tRNAs, forming tRNA-cmnm(5)s(2)U34. The protein is tRNA modification GTPase MnmE of Streptococcus agalactiae.